We begin with the raw amino-acid sequence, 360 residues long: Peptide chain release factor 1 (360 aa).

Gln235 carries the N5-methylglutamine modification. Positions Asp280–Thr293 are enriched in basic and acidic residues. The segment at Asp280 to Ser300 is disordered.

This sequence belongs to the prokaryotic/mitochondrial release factor family. In terms of processing, methylated by PrmC. Methylation increases the termination efficiency of RF1.

It is found in the cytoplasm. In terms of biological role, peptide chain release factor 1 directs the termination of translation in response to the peptide chain termination codons UAG and UAA. The sequence is that of Peptide chain release factor 1 from Paraburkholderia xenovorans (strain LB400).